The following is a 320-amino-acid chain: Protoheme IX farnesyltransferase (320 aa).

The tract at residues 1 to 24 (MSMITERPVSDPAGQSVSATGDGA) is disordered. 8 helical membrane-spanning segments follow: residues 33–55 (AVVA…VTTV), 68–88 (LWLM…ASVL), 117–137 (NALI…AVFT), 140–160 (LAAG…TAWL), 183–203 (WAAV…VVFF), 241–261 (ILVF…LGAG), 262–282 (MGPI…VEAH), and 300–320 (FHWS…DALI).

Belongs to the UbiA prenyltransferase family. Protoheme IX farnesyltransferase subfamily.

The protein localises to the cell membrane. The catalysed reaction is heme b + (2E,6E)-farnesyl diphosphate + H2O = Fe(II)-heme o + diphosphate. It functions in the pathway porphyrin-containing compound metabolism; heme O biosynthesis; heme O from protoheme: step 1/1. Functionally, converts heme B (protoheme IX) to heme O by substitution of the vinyl group on carbon 2 of heme B porphyrin ring with a hydroxyethyl farnesyl side group. The polypeptide is Protoheme IX farnesyltransferase (Salinispora tropica (strain ATCC BAA-916 / DSM 44818 / JCM 13857 / NBRC 105044 / CNB-440)).